The chain runs to 283 residues: tRNA-cytidine(32) 2-sulfurtransferase (283 aa).

The PP-loop motif motif lies at 37-42; that stretch reads SGGKDS. 3 residues coordinate [4Fe-4S] cluster: cysteine 112, cysteine 115, and cysteine 203.

The protein belongs to the TtcA family. In terms of assembly, homodimer. It depends on Mg(2+) as a cofactor. [4Fe-4S] cluster is required as a cofactor.

The protein resides in the cytoplasm. It catalyses the reaction cytidine(32) in tRNA + S-sulfanyl-L-cysteinyl-[cysteine desulfurase] + AH2 + ATP = 2-thiocytidine(32) in tRNA + L-cysteinyl-[cysteine desulfurase] + A + AMP + diphosphate + H(+). It participates in tRNA modification. Functionally, catalyzes the ATP-dependent 2-thiolation of cytidine in position 32 of tRNA, to form 2-thiocytidine (s(2)C32). The sulfur atoms are provided by the cysteine/cysteine desulfurase (IscS) system. The chain is tRNA-cytidine(32) 2-sulfurtransferase from Legionella pneumophila subsp. pneumophila (strain Philadelphia 1 / ATCC 33152 / DSM 7513).